Reading from the N-terminus, the 200-residue chain is Small ribosomal subunit protein uS4c (200 aa).

A disordered region spans residues 20–42 (GLTRKTTTRTSRPGQHGTQARKP). Residues 23–37 (RKTTTRTSRPGQHGT) are compositionally biased toward polar residues. An S4 RNA-binding domain is found at 90-152 (MRLDNVIFRL…PKSQSIVKNY (63 aa)).

It belongs to the universal ribosomal protein uS4 family. In terms of assembly, part of the 30S ribosomal subunit. Contacts protein S5. The interaction surface between S4 and S5 is involved in control of translational fidelity.

It localises to the plastid. It is found in the chloroplast. In terms of biological role, one of the primary rRNA binding proteins, it binds directly to 16S rRNA where it nucleates assembly of the body of the 30S subunit. Its function is as follows. With S5 and S12 plays an important role in translational accuracy. This is Small ribosomal subunit protein uS4c (rps4) from Guillardia theta (Cryptophyte).